The chain runs to 186 residues: MDTETLKKILQEKMDKALKVLDHELKGLRTGRASVNLLDSVTVEAYGSKMLLSQVASLSTPDARTINVQVWDKSMVSSVEKGITIANLGLTPATDGQLIRLPIPALTEERRKELVKLAHKYGEDAKISLRNIRRDGNEELKKLEKDNIIAKDEHHNLSEQVQKLTDEYSSKVDSAIKQKEQDIMTV.

Belongs to the RRF family.

Its subcellular location is the cytoplasm. Responsible for the release of ribosomes from messenger RNA at the termination of protein biosynthesis. May increase the efficiency of translation by recycling ribosomes from one round of translation to another. This chain is Ribosome-recycling factor, found in Rickettsia akari (strain Hartford).